Reading from the N-terminus, the 807-residue chain is Hyaluronate lyase (807 aa).

A signal peptide spans 1 to 40 (MTYRIKKWQKLSTITLLMAGVITLNGGEFRSVDKHQIAVA). Residues N241, H297, and Y306 contribute to the active site.

Belongs to the polysaccharide lyase 8 family.

The protein localises to the secreted. The catalysed reaction is [hyaluronan](n) = n 3-(4-deoxy-beta-D-gluc-4-enuronosyl)-N-acetyl-D-glucosamine + H2O. The chain is Hyaluronate lyase from Staphylococcus aureus (strain NCTC 8325 / PS 47).